A 905-amino-acid chain; its full sequence is Protein translocase subunit SecA (905 aa).

ATP is bound by residues Q89, 107–111, and D502; that span reads GEGKT. Zn(2+) contacts are provided by C887, C889, C898, and H899.

Belongs to the SecA family. Monomer and homodimer. Part of the essential Sec protein translocation apparatus which comprises SecA, SecYEG and auxiliary proteins SecDF-YajC and YidC. It depends on Zn(2+) as a cofactor.

It is found in the cell inner membrane. Its subcellular location is the cytoplasm. The catalysed reaction is ATP + H2O + cellular proteinSide 1 = ADP + phosphate + cellular proteinSide 2.. In terms of biological role, part of the Sec protein translocase complex. Interacts with the SecYEG preprotein conducting channel. Has a central role in coupling the hydrolysis of ATP to the transfer of proteins into and across the cell membrane, serving both as a receptor for the preprotein-SecB complex and as an ATP-driven molecular motor driving the stepwise translocation of polypeptide chains across the membrane. This Rhizobium leguminosarum bv. trifolii (strain WSM2304) protein is Protein translocase subunit SecA.